The chain runs to 183 residues: Alkyl hydroperoxide reductase AhpD (183 aa).

Cys-132 serves as the catalytic Proton donor. Cys-132 and Cys-135 are joined by a disulfide. The Cysteine sulfenic acid (-SOH) intermediate role is filled by Cys-135.

This sequence belongs to the AhpD family.

The enzyme catalyses N(6)-[(R)-dihydrolipoyl]-L-lysyl-[lipoyl-carrier protein] + a hydroperoxide = N(6)-[(R)-lipoyl]-L-lysyl-[lipoyl-carrier protein] + an alcohol + H2O. Functionally, antioxidant protein with alkyl hydroperoxidase activity. Required for the reduction of the AhpC active site cysteine residues and for the regeneration of the AhpC enzyme activity. This is Alkyl hydroperoxide reductase AhpD from Caulobacter vibrioides (strain ATCC 19089 / CIP 103742 / CB 15) (Caulobacter crescentus).